We begin with the raw amino-acid sequence, 278 residues long: Myb/SANT-like DNA-binding domain-containing protein 1 (278 aa).

A disordered region spans residues 1–27; sequence MVRGAGPGPSLSALSHPTGASGMAAAE. The region spanning 44-129 is the Myb-like domain; the sequence is RNWTDAEMRG…PDWPYYLAID (86 aa). The interval 138–168 is disordered; it reads SCDGKLPDSQPPGPSTSQTEASLSPPAKSTP.

This is Myb/SANT-like DNA-binding domain-containing protein 1 (MSANTD1) from Homo sapiens (Human).